Here is a 398-residue protein sequence, read N- to C-terminus: Phosphoglycerate kinase (398 aa).

Substrate is bound by residues 23 to 25 (DLN), Arg-38, 61 to 64 (HFGR), Arg-119, and Arg-152. ATP-binding positions include Lys-202, Glu-324, and 354 to 357 (GGDT).

Belongs to the phosphoglycerate kinase family. Monomer.

It localises to the cytoplasm. It catalyses the reaction (2R)-3-phosphoglycerate + ATP = (2R)-3-phospho-glyceroyl phosphate + ADP. The protein operates within carbohydrate degradation; glycolysis; pyruvate from D-glyceraldehyde 3-phosphate: step 2/5. This Bradyrhizobium diazoefficiens (strain JCM 10833 / BCRC 13528 / IAM 13628 / NBRC 14792 / USDA 110) protein is Phosphoglycerate kinase.